We begin with the raw amino-acid sequence, 298 residues long: Syntenin-1 (298 aa).

N-acetylserine is present on S2. Residues 2 to 60 (SLYPSLEDLKVDKVIQAQTAFSANPANPAILSEASAPIPHDGNLYPRLYPELSQYMGLS) are interaction with PDCD6IP. 3 consecutive short sequence motifs (LYPX(n)L motif) follow at residues 3-7 (LYPSL), 45-49 (LYPRL), and 49-53 (LYPEL). S6 is subject to Phosphoserine. Y46 carries the phosphotyrosine modification. PDZ domains follow at residues 114-193 (EVIL…IRDR) and 198-273 (TITM…MPAF). Residues N215 and 250–251 (KD) each bind a 1,2-diacyl-sn-glycero-3-phospho-(1D-myo-inositol-4,5-bisphosphate).

Monomer and homodimer. Interacts with SDC1, SDC2, SDC3, SDC4, NRXN2, EPHA7, EPHB1, NF2 isoform 1, TGFA and IL5RA. Interacts with NFASC and PTPRJ. Interacts with SDCBP2. Interacts with PDCD6IP. Forms a complex with PDCD6IP and SDC2. Interacts (via C-terminus) with TGFBR1. Binds to FZD7; this interaction is increased by inositol trisphosphate (IP3). Interacts with SMO. Phosphorylated on tyrosine residues. As to expression, expressed in lung cancers, including adenocarcinoma, squamous cell carcinoma and small-cell carcinoma (at protein level). Widely expressed. Expressed in fetal kidney, liver, lung and brain. In adult highest expression in heart and placenta.

Its subcellular location is the cell junction. It localises to the focal adhesion. The protein resides in the adherens junction. It is found in the cell membrane. The protein localises to the endoplasmic reticulum membrane. Its subcellular location is the nucleus. It localises to the melanosome. The protein resides in the cytoplasm. It is found in the cytosol. The protein localises to the cytoskeleton. Its subcellular location is the secreted. It localises to the extracellular exosome. The protein resides in the membrane raft. Multifunctional adapter protein involved in diverse array of functions including trafficking of transmembrane proteins, neuro and immunomodulation, exosome biogenesis, and tumorigenesis. Positively regulates TGFB1-mediated SMAD2/3 activation and TGFB1-induced epithelial-to-mesenchymal transition (EMT) and cell migration in various cell types. May increase TGFB1 signaling by enhancing cell-surface expression of TGFR1 by preventing the interaction between TGFR1 and CAV1 and subsequent CAV1-dependent internalization and degradation of TGFR1. In concert with SDC1/4 and PDCD6IP, regulates exosome biogenesis. Regulates migration, growth, proliferation, and cell cycle progression in a variety of cancer types. In adherens junctions may function to couple syndecans to cytoskeletal proteins or signaling components. Seems to couple transcription factor SOX4 to the IL-5 receptor (IL5RA). May also play a role in vesicular trafficking. Seems to be required for the targeting of TGFA to the cell surface in the early secretory pathway. The chain is Syntenin-1 (SDCBP) from Homo sapiens (Human).